Here is a 563-residue protein sequence, read N- to C-terminus: MSSNLSPTLNSGDKVKDGSIKEDRPYKIFFRDLFLFKENEMEAKKTEKLMNHNMKVYQKTTFSSRMKSRSYLSQLAFYPKRGGRSFEKFGPGPAPISRFLEGSDTKRTVHEFINDQRDRFLLEYALSTKRNTIKKFEKDIAMRERQLKKAEKKLQDDALAFEEFLRENDQRSVDALKLAAQETINKLQMTAELKKASMEVQAVKSEIAKTEFLLKEYMKYGFFLLQLSPKHWQIQQALKRAQASKSKANIILPKILARLSLHSSKKEGILEEFGGTAILSEDASRERDSQGKPSRILTRTSEKIKSNLTESFGSEDSLEFLLDDEMDFDLEPALYFKEPEELLQVLRELEEQNLTLFQYSQDVDENLEEVNKREKVIQDKTNSNIEFLLEQEEMLKANCVREEEKAAELQLRSRLFSFGEFNSDAQEILIDSLSKKITEVYKVCIGDAEDDGLNPIQKLVKVESRLVELCDLIESIPRENVEAIERMKQKERRQKFRDEKMREKQRHQEERLKAALEKAVAQPKKKLGRRLVYHSKPPSANKQQLPLVNETKTKAQEEEYFFT.

3 coiled-coil regions span residues 129-212 (KRNT…KTEF), 384-415 (NIEF…RSRL), and 485-522 (ERMK…AVAQ). Residues 521-550 (AQPKKKLGRRLVYHSKPPSANKQQLPLVNE) are disordered. Residues 523–533 (PKKKLGRRLVY) show a composition bias toward basic residues.

In terms of assembly, interacts with CCDC42, CFAP53, IFT88 and ODF2. Interacts with CCDC146. Interacts with TEKT3. Interacts with ubiquitinated histone H2A.

It localises to the cytoplasm. It is found in the cytoskeleton. Its subcellular location is the microtubule organizing center. The protein localises to the centrosome. The protein resides in the perinuclear region. It localises to the cell projection. It is found in the cilium. Its subcellular location is the flagellum. Essential for male fertility. Required for sperm flagellum biogenesis. Also required for acrosome biogenesis. Required for the attachment of developing acrosomes to the nucleus during spermiogenesis and may be involved in the transport of fibrous sheath components. The sequence is that of Coiled-coil domain-containing protein 38 (CCDC38) from Macaca fascicularis (Crab-eating macaque).